The following is a 225-amino-acid chain: PKHD-type hydroxylase Smlt1146 (225 aa).

Positions 78-177 constitute a Fe2OG dioxygenase domain; the sequence is KYLPPRFNRY…RVASFFWVQS (100 aa). 3 residues coordinate Fe cation: His-96, Asp-98, and His-158. Arg-168 serves as a coordination point for 2-oxoglutarate.

Requires Fe(2+) as cofactor. L-ascorbate is required as a cofactor.

The chain is PKHD-type hydroxylase Smlt1146 from Stenotrophomonas maltophilia (strain K279a).